The sequence spans 99 residues: A-type ATP synthase subunit F (99 aa).

It belongs to the V-ATPase F subunit family. In terms of assembly, has multiple subunits with at least A(3), B(3), C, D, E, F, H, I and proteolipid K(x).

The protein resides in the cell membrane. Component of the A-type ATP synthase that produces ATP from ADP in the presence of a proton gradient across the membrane. The protein is A-type ATP synthase subunit F of Methanococcus aeolicus (strain ATCC BAA-1280 / DSM 17508 / OCM 812 / Nankai-3).